Reading from the N-terminus, the 470-residue chain is MTLPRHLCLLPLSLSLLACSTPTPPTMGIAPPAGWQSPTASKAQALPDQRWWKAFASPELDQLIEIARNNSHDLAAAAARVRQAQARAVIAGAPLLPEVQFGLDASRQRLLRGEGNDQLDASSSERTSTSFDANLSASYEIDFWGGLRSARDSALRSLDASRLDRQTVKLTLFGSVADTYLQSLALKEQLRIAQLNLRNAQAVLSLVEARQQSGSSTQLELAQQRSLVAAQQRQLPLLEQQWQDTQVTLATLLGLPVQQLPTSTAAFADLRWPRIASGVPSELLARRPDIAAAEARLAAASANVQVARAALLPKLTLGVEFGSGASTFAQIFDSPYYTLTSGLVAPVFNRGRLRAAQQLAEAEQEELLEAYRTSILAAFADVEKALNATQGVDRQRQWQDQEVEQSRIAFQLAERRYRAGAETLLTVLDTQRSLYQAQDQQARLQLSQLQASVALYKALGGGWQADSPTR.

Positions 1–18 (MTLPRHLCLLPLSLSLLA) are cleaved as a signal peptide. Cysteine 19 carries N-palmitoyl cysteine lipidation. A lipid anchor (S-diacylglycerol cysteine) is attached at cysteine 19.

This sequence belongs to the outer membrane factor (OMF) (TC 1.B.17) family. As to quaternary structure, part of the tripartite efflux system PvdRT-OpmQ, which is composed of an inner membrane component with both ATPase and permease domains, PvdT, a periplasmic membrane fusion protein, PvdR, and an outer membrane component, OpmQ.

Its subcellular location is the cell outer membrane. In terms of biological role, part of the tripartite efflux system PvdRT-OpmQ required for the secretion into the extracellular milieu of the siderophore pyoverdine (PVD), which is involved in iron acquisition. The system is responsible for export of newly synthesized PVD after the final steps of biosynthesis have taken place in the periplasm. It is also responsible for recycling of PVD after internalization of ferri-PVD into the periplasm by the outer-membrane receptor FpvA and release of iron from PVD, thus making PVD available for new cycles of iron uptake. Contributes to resistance against ampicillin. The sequence is that of Pyoverdine export outer membrane protein OpmQ from Pseudomonas putida (strain ATCC 47054 / DSM 6125 / CFBP 8728 / NCIMB 11950 / KT2440).